A 341-amino-acid chain; its full sequence is Ketol-acid reductoisomerase (NADP(+)) (341 aa).

Residues 3 to 184 (LKVYYDKDCD…GGGRSGIIET (182 aa)) form the KARI N-terminal Rossmann domain. NADP(+) is bound by residues 26–29 (FGSQ), S54, and 84–87 (DELQ). The active site involves H109. Residue G135 participates in NADP(+) binding. Residues 185–330 (TFKDETETDL…GRLRAMMPWI (146 aa)) enclose the KARI C-terminal knotted domain. Mg(2+) contacts are provided by D193, E197, E229, and E233. S254 is a substrate binding site.

Belongs to the ketol-acid reductoisomerase family. Mg(2+) serves as cofactor.

It carries out the reaction (2R)-2,3-dihydroxy-3-methylbutanoate + NADP(+) = (2S)-2-acetolactate + NADPH + H(+). The enzyme catalyses (2R,3R)-2,3-dihydroxy-3-methylpentanoate + NADP(+) = (S)-2-ethyl-2-hydroxy-3-oxobutanoate + NADPH + H(+). It participates in amino-acid biosynthesis; L-isoleucine biosynthesis; L-isoleucine from 2-oxobutanoate: step 2/4. Its pathway is amino-acid biosynthesis; L-valine biosynthesis; L-valine from pyruvate: step 2/4. Its function is as follows. Involved in the biosynthesis of branched-chain amino acids (BCAA). Catalyzes an alkyl-migration followed by a ketol-acid reduction of (S)-2-acetolactate (S2AL) to yield (R)-2,3-dihydroxy-isovalerate. In the isomerase reaction, S2AL is rearranged via a Mg-dependent methyl migration to produce 3-hydroxy-3-methyl-2-ketobutyrate (HMKB). In the reductase reaction, this 2-ketoacid undergoes a metal-dependent reduction by NADPH to yield (R)-2,3-dihydroxy-isovalerate. The sequence is that of Ketol-acid reductoisomerase (NADP(+)) from Helicobacter hepaticus (strain ATCC 51449 / 3B1).